A 402-amino-acid polypeptide reads, in one-letter code: MLSEKTIEIVKSTVPLLQEKGVEITTRFYEILFSEHPELLNIFNHTNQKKGRQQQALANAVYAAATYIDNLEVIIPVVKQIGHKHRSLGIKAEHYPIVGTCLLRAIKEVAGAPDEVLNAWGEAYGVIADAFISIEAEMYEEAAHKEGGWKDFRNFVVVKKVKESDVITSFYLKPEDGGKVSSFIPGQYVTVQINIEGETYTHNRQYSLSDAPGKEYYRISVKKEKGVDTPDGKVSNYLHDHVKEGDMLPVSAPAGDFVLNMDSTLPVVLISGGVGITPMMSMLNTLIEQDSKRNVCFVHAALNSNTHAMKEHVEALDNEYEQVKAYTCYSAPTEKDLEMKNFDKEGLIEAEWLQTIIPTTEAEFYFCGPVAFMKHINATLTDLGVKQEHIHYEFFGPAASLQ.

One can recognise a Globin domain in the interval 1–136 (MLSEKTIEIV…IADAFISIEA (136 aa)). His-85 serves as a coordination point for heme b. Residues Tyr-95 and Glu-135 each act as charge relay system in the active site. Residues 147 to 402 (GGWKDFRNFV…EFFGPAASLQ (256 aa)) are reductase. The FAD-binding FR-type domain maps to 150–260 (KDFRNFVVVK…SAPAGDFVLN (111 aa)). FAD is bound by residues Tyr-188 and 204–207 (RQYS). NADP(+) is bound at residue 273 to 278 (GVGITP). 394-397 (FFGP) serves as a coordination point for FAD.

This sequence belongs to the globin family. Two-domain flavohemoproteins subfamily. It in the C-terminal section; belongs to the flavoprotein pyridine nucleotide cytochrome reductase family. Heme b serves as cofactor. Requires FAD as cofactor.

It carries out the reaction 2 nitric oxide + NADPH + 2 O2 = 2 nitrate + NADP(+) + H(+). It catalyses the reaction 2 nitric oxide + NADH + 2 O2 = 2 nitrate + NAD(+) + H(+). Is involved in NO detoxification in an aerobic process, termed nitric oxide dioxygenase (NOD) reaction that utilizes O(2) and NAD(P)H to convert NO to nitrate, which protects the bacterium from various noxious nitrogen compounds. Therefore, plays a central role in the inducible response to nitrosative stress. The chain is Flavohemoprotein from Bacillus cereus (strain ATCC 10987 / NRS 248).